The following is a 357-amino-acid chain: Probable leucine aminopeptidase MCYG_04170 (357 aa).

A signal peptide spans 1 to 15 (MKVLAALALSALALA). N-linked (GlcNAc...) asparagine glycosylation occurs at asparagine 76. Zn(2+) contacts are provided by histidine 167 and aspartate 185. Asparagine 186 is a glycosylation site (N-linked (GlcNAc...) asparagine). Zn(2+) contacts are provided by glutamate 224 and aspartate 251. The cysteines at positions 291 and 295 are disulfide-linked. A Zn(2+)-binding site is contributed by histidine 324.

It belongs to the peptidase M28 family. M28E subfamily. As to quaternary structure, monomer. Zn(2+) serves as cofactor.

It localises to the secreted. Functionally, probable extracellular aminopeptidase which contributes to pathogenicity. This is Probable leucine aminopeptidase MCYG_04170 from Arthroderma otae (strain ATCC MYA-4605 / CBS 113480) (Microsporum canis).